The chain runs to 107 residues: Essential MCU regulator, mitochondrial (107 aa).

A mitochondrion-targeting transit peptide spans 1–47 (MASTAARRLAWVAVRPGALWSGPRGRRGGDVYTVPGSSGLSQVPSRS). Topologically, residues 48-65 (VIVTRSGAILPKPVKMSF) are mitochondrial matrix. A helical membrane pass occupies residues 66 to 85 (GLLRVFSIVIPFLYVGTLIS). A GXXXX[G/A/S] motif is present at residues 81 to 85 (GTLIS). The Mitochondrial intermembrane portion of the chain corresponds to 86 to 107 (KNFAALLEEHDIFVPEDDDDDD).

The protein belongs to the SMDT1/EMRE family. Component of the uniplex complex, composed of MCU, EMRE/SMDT1, MICU1 and MICU2 (or MICU3) in a 4:4:1:1 stoichiometry. The number of EMRE/SMDT1 molecules is hovewer variable, ranging from 1 to 4 copies per uniplex complex, leading to uniplex complexes with distinct gatekeeping profiles. Interacts (via its C-terminal poly-Asp tail) with MCUR1; the interaction is direct. Unprocessed form interacts (via transit peptide) with MAIP1. In terms of processing, undergoes proteolytic degradation in neurons: degraded by AFG3L2 and SPG7 before SMDT1/EMRE assembly with the uniporter complex, limiting the availability of SMDT1/EMRE for MCU assembly and promoting efficient assembly of gatekeeper subunits with MCU. As to expression, widely expressed.

The protein resides in the mitochondrion inner membrane. In terms of biological role, essential regulatory subunit of the mitochondrial calcium uniporter complex (uniplex), a complex that mediates calcium uptake into mitochondria. Required to bridge the calcium-sensing proteins MICU1 with the calcium-conducting subunit MCU. Acts by mediating activation of MCU and retention of MICU1 to the MCU pore, in order to ensure tight regulation of the uniplex complex and appropriate responses to intracellular calcium signaling. The protein is Essential MCU regulator, mitochondrial of Mus musculus (Mouse).